A 303-amino-acid polypeptide reads, in one-letter code: N-acetylmuramic acid 6-phosphate etherase (303 aa).

The 164-residue stretch at isoleucine 61–lysine 224 folds into the SIS domain. Glutamate 89 functions as the Proton donor in the catalytic mechanism. Residue glutamate 120 is part of the active site.

Belongs to the GCKR-like family. MurNAc-6-P etherase subfamily. As to quaternary structure, homodimer.

It carries out the reaction N-acetyl-D-muramate 6-phosphate + H2O = N-acetyl-D-glucosamine 6-phosphate + (R)-lactate. It participates in amino-sugar metabolism; 1,6-anhydro-N-acetylmuramate degradation. Its pathway is amino-sugar metabolism; N-acetylmuramate degradation. The protein operates within cell wall biogenesis; peptidoglycan recycling. Specifically catalyzes the cleavage of the D-lactyl ether substituent of MurNAc 6-phosphate, producing GlcNAc 6-phosphate and D-lactate. Together with AnmK, is also required for the utilization of anhydro-N-acetylmuramic acid (anhMurNAc) either imported from the medium or derived from its own cell wall murein, and thus plays a role in cell wall recycling. The protein is N-acetylmuramic acid 6-phosphate etherase (murQ) of Haemophilus influenzae (strain ATCC 51907 / DSM 11121 / KW20 / Rd).